A 310-amino-acid chain; its full sequence is Zinc finger CCCH domain-containing protein 14 (310 aa).

Residues 56-75 (ESLSPSPPSSSSPPSRVDTT) form a disordered region. Positions 84–129 (KLILEYDELNEHYELCLNRLQSLMTELDSLRHENDSLRFENSDLLK) form a coiled coil. Residues 155–167 (QISDSRSAKRNNQ) are compositionally biased toward basic and acidic residues. A disordered region spans residues 155 to 174 (QISDSRSAKRNNQERNSLPK). C3H1-type zinc fingers lie at residues 232–260 (MMKTELCNKWQETGACCYGDNCQFAHGID) and 270–298 (RYKTEVCRMMVTGAMCPYGHRCHFRHSLT).

As to expression, highly expressed in secondary cell wall-forming tissues and the xylem cells of roots. Expressed predominantly in inflorescence stems, flowers and siliques. Highly expressed in the basal portion of stems, where cells are undergoing secondary cell wall thickening.

Functions probably as a transcriptional factor that activates genes involved in secondary cell wall biosynthesis. May play a role in both transcriptional and post-transcriptional regulation. Binds to ssDNA, dsDNA, and ribohomopolymers in vitro. Maybe involved in post-transcriptional regulation of its target genes. Targets RNA of a polygalacturonase, a well-known cell wall modifying gene. Functions redudantly with C3H15 to regulate secondary cell wall formation. C3H14 and C3H15 have overlapping roles in the regulation of secondary cell wall formation and anther development. C3H14 may contribute more to secondary cell wall thickening while C3H15 could be more important in anther development. May regulate at both the transcriptional and post-transcriptional levels the expression of many genes involved in various biological processes, particularly those associated with cell wall metabolism and pollen development. The protein is Zinc finger CCCH domain-containing protein 14 of Arabidopsis thaliana (Mouse-ear cress).